A 338-amino-acid chain; its full sequence is MTEKIAVLGAGSWGSILAGVLDENKNEVWLWTNKESQAKELNENHTNEHYIPGHKYSETIKATTNLKEAVDGASAVLFVVPTKVIRLVAQQLVEVLKELGQKPLIIHASKGLELGSHKRISEVIEEEIPSEYRKDVVVLSGPSHAEEVARKDITLITAACENLDSAKKVQSLFMNDYLRIYTNKDVIGVETGAAFKNVIAIGVGALHGLGYGDDAKAALMTRGLAEISRLGVAFGADPLTFIGLSGVGDLIVTCTSVHSRNWRAGNQLGKGKALDEVIQDMGMVIEGINTCKAAYELAQQKNIEMPITEAIYNVLYNGKDIKDEISLLMQREGKEEIK.

NADPH is bound by residues Ser-12, Trp-13, Lys-34, and Lys-110. Positions 110, 141, and 143 each coordinate sn-glycerol 3-phosphate. Ala-145 provides a ligand contact to NADPH. The sn-glycerol 3-phosphate site is built by Lys-196, Asp-249, Ser-259, Arg-260, and Asn-261. The active-site Proton acceptor is the Lys-196. NADPH is bound at residue Arg-260. Residues Val-284 and Glu-286 each coordinate NADPH.

It belongs to the NAD-dependent glycerol-3-phosphate dehydrogenase family.

It localises to the cytoplasm. The catalysed reaction is sn-glycerol 3-phosphate + NAD(+) = dihydroxyacetone phosphate + NADH + H(+). The enzyme catalyses sn-glycerol 3-phosphate + NADP(+) = dihydroxyacetone phosphate + NADPH + H(+). It participates in membrane lipid metabolism; glycerophospholipid metabolism. Its function is as follows. Catalyzes the reduction of the glycolytic intermediate dihydroxyacetone phosphate (DHAP) to sn-glycerol 3-phosphate (G3P), the key precursor for phospholipid synthesis. The chain is Glycerol-3-phosphate dehydrogenase [NAD(P)+] from Ligilactobacillus salivarius (strain UCC118) (Lactobacillus salivarius).